The following is a 130-amino-acid chain: Small ribosomal subunit protein uS9 (130 aa).

Positions 101–110 (AGFLTRDPRM) are enriched in basic and acidic residues. Positions 101–130 (AGFLTRDPRMKERKKYGLKKARRAPQFSKR) are disordered. The segment covering 111 to 130 (KERKKYGLKKARRAPQFSKR) has biased composition (basic residues).

It belongs to the universal ribosomal protein uS9 family.

This Clostridium tetani (strain Massachusetts / E88) protein is Small ribosomal subunit protein uS9.